The following is a 369-amino-acid chain: Maltose/maltodextrin import ATP-binding protein MalK (369 aa).

One can recognise an ABC transporter domain in the interval 4-234; sequence VQLRNVTKAW…PADRFVAGFI (231 aa). 36 to 43 is an ATP binding site; that stretch reads GPSGCGKS.

This sequence belongs to the ABC transporter superfamily. Maltooligosaccharide importer (TC 3.A.1.1.1) family. As to quaternary structure, the complex is composed of two ATP-binding proteins (MalK), two transmembrane proteins (MalG and MalK) and a solute-binding protein (MalE).

Its subcellular location is the cell inner membrane. It catalyses the reaction D-maltose(out) + ATP + H2O = D-maltose(in) + ADP + phosphate + H(+). Part of the ABC transporter complex MalEFGK involved in maltose/maltodextrin import. Responsible for energy coupling to the transport system. In Salmonella choleraesuis (strain SC-B67), this protein is Maltose/maltodextrin import ATP-binding protein MalK.